Reading from the N-terminus, the 1463-residue chain is Probable oxidoreductase PXDNL (1463 aa).

A signal peptide spans 1-23 (MEPRLFCWTTLFLLAGWCLPGLP). One can recognise an LRRNT domain in the interval 24-50 (CPSRCLCFKSTVRCMHLMLDHIPQVPQ). LRR repeat units follow at residues 51 to 72 (QTTV…AFKK), 75 to 96 (NLNT…AFEG), 99 to 120 (NLLY…TFKG), 123 to 144 (SLEH…TFGD), and 147 to 168 (RLER…SFSN). An LRRCT domain is found at 180–233 (NALVCDCDLMWLGELLQGFAQHGHTQAAATCEYPRRLHGRAVASVTVEEFNCQS). 4 Ig-like C2-type domains span residues 234–322 (PRIT…AMLR), 330–414 (PSFV…ANII), 419–504 (PQFT…VQLT), and 507–596 (PKAL…MFLT). 5 cysteine pairs are disulfide-bonded: Cys255–Cys305, Cys351–Cys398, Cys440–Cys488, Cys532–Cys580, and Cys718–Cys734. Asn387 carries an N-linked (GlcNAc...) asparagine glycan. The Proton acceptor role is filled by His812. Position 813 (Asp813) interacts with Ca(2+). Intrachain disulfides connect Cys832-Cys842 and Cys836-Cys859. Residues Thr891, Tyr893, Asp895, and Ser897 each contribute to the Ca(2+) site. A disulfide bridge links Cys944 with Cys953. Position 1057 (His1057) interacts with heme b. 2 cysteine pairs are disulfide-bonded: Cys1160/Cys1217 and Cys1258/Cys1284. Positions 1393-1451 (AGCTDVRGVPRKAEERWMKEDCTHCICESGQVTCVVEICPPAPCPSPELVKGTCCPVCR) constitute a VWFC domain.

The protein belongs to the peroxidase family. XPO subfamily. Interacts with PXDN; this interaction inhibits the peroxidase activity of PXDN. Heme b is required as a cofactor. In terms of processing, phosphorylation by SRC on tyrosine residues is required for targeting to polysomes. As to expression, the 57 kDa isoform PMR1 is the only form detected at protein levels in human cell lines. Expressed in heart.

It localises to the secreted. It is found in the endoplasmic reticulum. Its subcellular location is the cell membrane. The protein resides in the cytoplasm. In terms of biological role, probable oxidoreductase. Lacks peroxidase activity. Inhibits the peroxidase activity of PXDN through its interaction. Its function is as follows. Endonuclease selectively degrading some target mRNAs while they are engaged by translating ribosomes, among which albumin and beta-globin mRNAs. This Homo sapiens (Human) protein is Probable oxidoreductase PXDNL.